The following is a 179-amino-acid chain: Transcription factor BOA15 (179 aa).

The protein resides in the nucleus. In terms of biological role, transcription factor that probably coregulates the gene clusters that mediates the biosynthesis of botcinin acid and its botcinin derivatives, acetate-derived polyketides that contribute to virulence when combined with the sesquiterpene botrydial. Botcinin acid and its derivatives have been shown to induce chlorosis and necrosis during host plant infection, but also have antifungal activities. This Botryotinia fuckeliana (strain B05.10) (Noble rot fungus) protein is Transcription factor BOA15.